Here is a 363-residue protein sequence, read N- to C-terminus: 3-dehydroquinate synthase (363 aa).

NAD(+)-binding positions include 75–80 (DAEEGK), 109–113 (GAVTD), 133–134 (TS), Lys146, Lys155, and 173–176 (TLQT). Residues Glu188, His251, and His267 each contribute to the Zn(2+) site.

Belongs to the sugar phosphate cyclases superfamily. Dehydroquinate synthase family. The cofactor is Co(2+). Requires Zn(2+) as cofactor. It depends on NAD(+) as a cofactor.

The protein localises to the cytoplasm. The catalysed reaction is 7-phospho-2-dehydro-3-deoxy-D-arabino-heptonate = 3-dehydroquinate + phosphate. It participates in metabolic intermediate biosynthesis; chorismate biosynthesis; chorismate from D-erythrose 4-phosphate and phosphoenolpyruvate: step 2/7. Functionally, catalyzes the conversion of 3-deoxy-D-arabino-heptulosonate 7-phosphate (DAHP) to dehydroquinate (DHQ). In Paenarthrobacter aurescens (strain TC1), this protein is 3-dehydroquinate synthase.